We begin with the raw amino-acid sequence, 292 residues long: Glutamyl-Q tRNA(Asp) synthetase (292 aa).

L-glutamate is bound by residues 9 to 13 and Glu-45; that span reads RFAPS. Residues 12-22 carry the 'HIGH' region motif; sequence PSPSGPLHAGS. Zn(2+) contacts are provided by Cys-99, Cys-101, Tyr-121, and Cys-125. Positions 184 and 202 each coordinate L-glutamate. A 'KMSKS' region motif is present at residues 240–244; that stretch reads KLSKQ. Lys-243 serves as a coordination point for ATP.

Belongs to the class-I aminoacyl-tRNA synthetase family. GluQ subfamily. Requires Zn(2+) as cofactor.

Its function is as follows. Catalyzes the tRNA-independent activation of glutamate in presence of ATP and the subsequent transfer of glutamate onto a tRNA(Asp). Glutamate is transferred on the 2-amino-5-(4,5-dihydroxy-2-cyclopenten-1-yl) moiety of the queuosine in the wobble position of the QUC anticodon. The polypeptide is Glutamyl-Q tRNA(Asp) synthetase (Verminephrobacter eiseniae (strain EF01-2)).